A 142-amino-acid chain; its full sequence is Translation initiation factor 2 subunit beta (142 aa).

It belongs to the eIF-2-beta/eIF-5 family. As to quaternary structure, heterotrimer composed of an alpha, a beta and a gamma chain.

EIF-2 functions in the early steps of protein synthesis by forming a ternary complex with GTP and initiator tRNA. This is Translation initiation factor 2 subunit beta from Staphylothermus marinus (strain ATCC 43588 / DSM 3639 / JCM 9404 / F1).